A 441-amino-acid polypeptide reads, in one-letter code: Interferon-related developmental regulator 2 (441 aa).

Positions 1–15 are enriched in basic residues; it reads MPRARKGNALRKGGQ. Positions 1-51 are disordered; it reads MPRARKGNALRKGGQRRGGGARSSTQADSGSSEDEAASEARSTTSDCPSLL.

Belongs to the IFRD family. Associates with ribosomes; promoting ribosome inactivation.

Functionally, ribosome-binding protein that acts as an inhibitor of mRNA translation by promoting ribosome inactivation. Associates with the P- and E-sites of the ribosome and inserts a C-terminal helix into the mRNA exit channel to preclude translation. This Mus musculus (Mouse) protein is Interferon-related developmental regulator 2.